A 4493-amino-acid polypeptide reads, in one-letter code: Mucin-17 (4493 aa).

The N-terminal stretch at 1-25 (MPRPGTMALCLLTLVLSLLPPQAAA) is a signal peptide. At 26–4393 (EQDLSVNRAV…QGTQKSLVYG (4368 aa)) the chain is on the extracellular side. Residues 88-105 (NPEMTSIESSVTSDTPGV) are compositionally biased toward polar residues. 4 disordered regions span residues 88–159 (NPEM…SISS), 188–223 (LTTS…SMPA), 248–277 (TISA…STPL), and 306–344 (VITS…ASTM). Residues 106–146 (SSTRMTPTESRTTSESTSDSTTLFPSSTEDTSSPTTPEGTD) are compositionally biased toward low complexity. Polar residues predominate over residues 148–159 (PMSTPSEESISS). 57 consecutive repeat copies span residues 185-245 (STPL…EIST), 246-300 (PVTI…TTPA), 301-361 (ATNI…PVDT), 362-418 (STLV…TIPV), 420-477 (SKTF…TTPV), 479-538 (SKTQ…PVDT), 539-597 (STPV…PADS), 598-654 (NTFV…TTPV), 656-715 (SNTP…PVDT), 716-774 (STPV…PLDT), 775-831 (STHI…TTPV), 833-892 (SNSP…PVDT), 893-951 (STPV…PVDT), 952-1010 (STPV…PVDS), 1011-1069 (NTPL…PADT), 1070-1121 (STPV…ASTL), 1122-1187 (STTP…PVDS), 1188-1246 (KTQV…PVDT), 1247-1305 (STPV…PVDT), 1306-1364 (KGPV…PVDN), 1365-1423 (STPV…PVDT), 1424-1482 (STPG…PVDS), 1483-1541 (NSPV…PAVT), 1542-1600 (STPV…PIDS), 1601-1656 (KTQV…TTPV), 1658-1717 (SNSP…PVDN), 1718-1776 (STPV…PIDT), 1777-1835 (STPV…PVDS), 1836-1895 (NSPV…AVTS), 1896-1951 (TPVT…TTLA), 1953-2012 (TRTP…PVDT), 2013-2071 (STPA…PVDS), 2072-2127 (KTQV…TTPV), 2129-2188 (SNSP…PVDT), 2189-2247 (STPV…PVDT), 2248-2306 (STPV…PVDS), 2307-2365 (NTPF…PADT), 2366-2424 (STPV…PVDT), 2425-2483 (STPV…PVDT), 2484-2540 (STPM…TTPV), 2542-2601 (SNSP…PVDT), 2602-2653 (SIPV…ASTL), 2654-2719 (STTP…PVDT), 2720-2770 (STPV…EAST), 2772-2837 (STTA…PVDT), 2838-2896 (STPV…PVDT), 2897-2955 (SIPV…PVDT), 2956-3014 (RTPV…PADT), 3015-3073 (STPV…PVDS), 3074-3132 (NSPV…PVDT), 3133-3191 (STPV…PVDT), 3192-3247 (STPV…TTPV), 3249-3308 (SNTP…PADT), 3309-3367 (STPV…PVDT), 3368-3426 (STPV…PVDS), 3427-3485 (NTLV…PVDT), and 3486-3544 (STPV…PVDS). The 59 X approximate tandem repeats stretch occupies residues 185 to 3727 (STPLTTSTQA…SVVTSTPVTT (3543 aa)). Over residues 188-210 (LTTSTQASSSPTTPESTTIPKST) the composition is skewed to low complexity. The span at 211-223 (NSEGSTPLTSMPA) shows a compositional bias: polar residues. Residues 308–323 (TSTEASSSPTTAEGTS) show a composition bias toward low complexity. The segment covering 324–344 (IPTSTYTEGSTPLTSTPASTM) has biased composition (polar residues). The span at 425–441 (TTASEASSSPTTAEDTS) shows a compositional bias: low complexity. Disordered stretches follow at residues 425–629 (TTAS…ERGT), 644–868 (SEAS…TPLT), 886–1104 (STTP…TPLT), 1116–1163 (SEAS…TPLA), 1175–1279 (SEAN…GSTL), and 1296–1338 (STLL…GRTP). Positions 442–483 (IATSTPSEGSTPLTSMPVSTTPVASSEASNLSTTPVDSKTQV) are enriched in polar residues. An N-linked (GlcNAc...) asparagine glycan is attached at Asn471. Residues 484 to 497 (TTSTEASSSPPTAE) are compositionally biased toward low complexity. The span at 498–528 (VNSMPTSTPSEGSTPLTSMSVSTMPVASSEA) shows a compositional bias: polar residues. Low complexity-rich tracts occupy residues 529 to 573 (STLS…TPLT) and 584 to 618 (SSEA…EGTS). Polar residues-rich tracts occupy residues 619–629 (MPTSTYSERGT) and 644–660 (SEAS…NTPV). A compositionally biased stretch (low complexity) spans 661-677 (TTSTEATSSSTTAEGTS). Residues 678-705 (MPTSTYTEGSTPLTSMPVNTTLVASSEA) show a composition bias toward polar residues. Asn696 carries an N-linked (GlcNAc...) asparagine glycan. The segment covering 706–733 (STLSTTPVDTSTPVTTSTEASSSPTTAD) has biased composition (low complexity). Positions 737–754 (MPTSTPSEGSTPLTSMPV) are enriched in polar residues. The segment covering 755–776 (SKTLLTSSEASTLSTTPLDTST) has biased composition (low complexity). The span at 777–832 (HITTSTEASCSPTTTEGTSMPISTPSEGSPLLTSIPVSITPVTSPEASTLSTTPVD) shows a compositional bias: polar residues. The segment covering 833 to 849 (SNSPVTTSTEVSSSPTP) has biased composition (low complexity). The segment covering 854-868 (SMPTSTYSEGRTPLT) has biased composition (polar residues). Over residues 886 to 900 (STTPVDTSTPVTNST) the composition is skewed to low complexity. Asn898 carries N-linked (GlcNAc...) asparagine glycosylation. The span at 901–944 (EARSSPTTSEGTSMPTSTPGEGSTPLTSMPDSTTPVVSSEARTL) shows a compositional bias: polar residues. Positions 945 to 972 (SATPVDTSTPVTTSTEATSSPTTAEGTS) are enriched in low complexity. The segment covering 973–1011 (IPTSTPSEGTTPLTSTPVSHTLVANSEASTLSTTPVDSN) has biased composition (polar residues). Residues 1012-1021 (TPLTTSTEAS) show a composition bias toward low complexity. Positions 1029–1062 (GTSMPTSTPSEGSTPLTRMPVSTTMVASSETSTL) are enriched in polar residues. Low complexity predominate over residues 1063–1090 (STTPADTSTPVTTYSQASSSSTTADGTS). 2 stretches are compositionally biased toward polar residues: residues 1091–1104 (MPTS…TPLT) and 1116–1132 (SEAS…SIPV). The span at 1133-1149 (TTSTEASSSPTTAEGTS) shows a compositional bias: low complexity. Composition is skewed to polar residues over residues 1175–1198 (SEAN…TEAS) and 1205–1222 (EVTS…TPLT). A compositionally biased stretch (low complexity) spans 1237-1279 (STLSTSPVDTSTPVTTSAETSSSPTTAEGTSLPTSTTSEGSTL). 2 stretches are compositionally biased toward polar residues: residues 1310-1320 (VTSNEVSSSPT) and 1326-1338 (SMPT…GRTP). Asn1345 is a glycosylation site (N-linked (GlcNAc...) asparagine). Residues 1360–1394 (TPVDNSTPVTTSTEACSSPTTSEGTSMPNSNPSEG) show a composition bias toward polar residues. Disordered regions lie at residues 1360–1516 (TPVD…STAL), 1537–1575 (TPAV…STPL), 1590–1930 (ANTL…PLTS), 1947–2163 (STTL…RTPL), 2177–2281 (AIST…TTPL), 2295–2501 (EVST…TTAE), 2524–2630 (TTPV…TPSE), 2647–2693 (SSEA…RSTP), 2709–2751 (ASTL…DGST), 2765–2853 (SSEA…SPTT), 2879–2925 (TPVA…TPSE), 2942–3167 (GSEA…TPLT), 3182–3577 (STLS…GSSS), 3589–3635 (TSSE…EVST), 3667–3701 (ITST…TMPV), 3785–3812 (MTTA…TSER), 3829–3849 (PSEA…LLTS), 3892–3914 (ASIA…DTAS), 3965–3988 (VITS…FSTT), and 4008–4129 (STAP…TPTV). 2 stretches are compositionally biased toward low complexity: residues 1395 to 1415 (TTPL…EAST) and 1423 to 1442 (TSTP…TAEG). Over residues 1461–1483 (PVSNTPVANSEASTLSTTPVDSN) the composition is skewed to polar residues. Residues 1484 to 1499 (SPVVTSTAVSSSPTPA) show a composition bias toward low complexity. Over residues 1504–1516 (IAISTPSEGSTAL) the composition is skewed to polar residues. The segment covering 1537–1547 (TPAVTSTPVTT) has biased composition (low complexity). Composition is skewed to polar residues over residues 1548–1575 (YSQA…STPL) and 1590–1604 (ANTL…KTQV). Low complexity predominate over residues 1605 to 1620 (TASTEASSSTTAEGSS). Composition is skewed to polar residues over residues 1621-1673 (MTIS…SSPT) and 1679-1775 (SMPT…TPID). A compositionally biased stretch (low complexity) spans 1776 to 1797 (TSTPVTTSTEATSSPTTAEGTS). The segment covering 1798 to 1836 (IPTSTLSEGMTPLTSTPVSHTLVANSEASTLSTTPVDSN) has biased composition (polar residues). Residues 1837–1852 (SPVVTSTAVSSSPTPA) show a composition bias toward low complexity. Positions 1856–1883 (SIATSTPSEGSTALTSIPVSTTTVASSE) are enriched in polar residues. The span at 1884–1900 (TNTLSTTPAVTSTPVTT) shows a compositional bias: low complexity. 2 stretches are compositionally biased toward polar residues: residues 1901 to 1921 (YAQV…TSTP) and 1947 to 1976 (STTL…TSMP). The segment covering 1984 to 2033 (STPLTSMPLSTTLVVSSEASTLSTTPVDTSTPATTSTEGSSSPTTAGGTS) has biased composition (low complexity). 2 stretches are compositionally biased toward polar residues: residues 2034-2043 (IQTSTPSERT) and 2051-2077 (VSTT…QVTN). Asn2077 is a glycosylation site (N-linked (GlcNAc...) asparagine). The segment covering 2078 to 2091 (STEASSSATAEGSS) has biased composition (low complexity). Over residues 2092-2156 (MTISAPSEGS…EGTSMQTSTY (65 aa)) the composition is skewed to polar residues. Over residues 2177 to 2196 (AISTLSTTPVDTSTPVTNST) the composition is skewed to low complexity. An N-linked (GlcNAc...) asparagine glycan is attached at Asn2194. A compositionally biased stretch (polar residues) spans 2197-2240 (EARSSPTTSEGTSMPTSTPSEGSTPFTSMPVSTMPVVTSEASTL). Positions 2241 to 2268 (SATPVDTSTPVTTSTEATSSPTTAEGTS) are enriched in low complexity. Composition is skewed to polar residues over residues 2269–2281 (IPTS…TTPL) and 2295–2307 (EVST…VDSN). A compositionally biased stretch (low complexity) spans 2308 to 2317 (TPFTTSTEAS). Polar residues predominate over residues 2325–2358 (GTSMPTSTSSEGNTPLTRMPVSTTMVASFETSTL). A compositionally biased stretch (low complexity) spans 2359–2371 (STTPADTSTPVTT). A compositionally biased stretch (polar residues) spans 2372 to 2395 (YSQAGSSPTTADDTSMPTSTYSEG). Low complexity-rich tracts occupy residues 2396–2445 (STPL…EGTS) and 2462–2499 (PVST…SPTT). Positions 2524–2547 (TTPVASPEASTLSTTPVDSNSPVV) are enriched in polar residues. The span at 2548 to 2563 (TSTEISSSATSAEGTS) shows a compositional bias: low complexity. Residues 2564–2576 (MPTSTYSEGSTPL) show a composition bias toward polar residues. A compositionally biased stretch (low complexity) spans 2586–2617 (LASSEASTLSTTPVDTSIPVTTSTETSSSPTT). A compositionally biased stretch (polar residues) spans 2618-2628 (AKDTSMPISTP). Low complexity predominate over residues 2654–2681 (STTPVDTRTLVTTSTGTSSSPTTAEGSS). A compositionally biased stretch (polar residues) spans 2682-2693 (MPTSTPGERSTP). A compositionally biased stretch (low complexity) spans 2710 to 2740 (STLSTTPVDTSTPVTTSAEASSSPTTAEGTS). The segment covering 2741–2751 (MRISTPSDGST) has biased composition (polar residues). Low complexity-rich tracts occupy residues 2765-2816 (SSEA…TSMP) and 2829-2853 (TLST…SPTT). The segment covering 2879–2900 (TPVASSEASTLSTTPVDTSIPV) has biased composition (polar residues). 2 stretches are compositionally biased toward low complexity: residues 2901–2917 (TTST…EGTS) and 2950–2976 (TTPV…EGTS). Over residues 2988 to 3009 (PLTSMSVSTMPVASSEASTLSR) the composition is skewed to polar residues. Residues 3010 to 3031 (TPADTSTPVTTSTEASSSPTTA) show a composition bias toward low complexity. A compositionally biased stretch (polar residues) spans 3037–3057 (PISTPSEGSTPLTSIPVSTTP). Low complexity-rich tracts occupy residues 3073–3089 (SNSP…SPTP) and 3104–3140 (STPL…TTST). A compositionally biased stretch (polar residues) spans 3141–3166 (EAHSSPTTSEGTSMPTSTPSEGSTPL). Low complexity predominate over residues 3185–3211 (SATPVDTSTPVTTSTEATSSTTAEGTS). The span at 3212–3253 (IPTSTPSEGMTPLTSVPVSNTPVASSEASILSTTPVDSNTPL) shows a compositional bias: polar residues. Positions 3254 to 3267 (TTSTEASSSPPTAE) are enriched in low complexity. Positions 3268 to 3288 (GTSMPTSTPSEGSTPLTSMPV) are enriched in polar residues. Positions 3289–3314 (STTTVASSETSTLSTTPADTSTPVTT) are enriched in low complexity. Positions 3329 to 3357 (SMPTSTYSEGSTPLTNMSFSTTPVVSSEA) are enriched in polar residues. Asn3344 carries an N-linked (GlcNAc...) asparagine glycan. The segment covering 3358 to 3375 (STLSTTPVDTSTPVTTST) has biased composition (low complexity). The span at 3376-3401 (EASLSPTTAEGTSIPTSSPSEGTTPL) shows a compositional bias: polar residues. Low complexity predominate over residues 3405–3414 (PVSTTPVVSS). Polar residues-rich tracts occupy residues 3415-3441 (EVNT…SSPT) and 3447-3475 (SLPT…SSEA). Over residues 3476 to 3501 (STLSTTPVDTSTPVTTSSPTNSSPTT) the composition is skewed to low complexity. 2 stretches are compositionally biased toward polar residues: residues 3502 to 3549 (AEVT…TFVT) and 3558 to 3571 (PATL…MSTP). A compositionally biased stretch (low complexity) spans 3589 to 3616 (TSSEASTPSTPSVDRSTPVTTSTQSNST). 2 repeat units span residues 3604-3662 (STPV…PVDT) and 3663-3727 (STPV…PVTT). Residues 3626–3635 (PMSTPSEVST) show a composition bias toward polar residues. Over residues 3667-3679 (ITSTQVSSSPVTP) the composition is skewed to low complexity. Polar residues-rich tracts occupy residues 3690 to 3701 (SEGSTPLTTMPV) and 3785 to 3806 (MTTA…TMPM). Low complexity-rich tracts occupy residues 3967-3988 (TSTE…FSTT), 4008-4083 (STAP…SSTT), and 4090-4129 (TTMT…TPTV). Asn4116 is a glycosylation site (N-linked (GlcNAc...) asparagine). The EGF-like domain maps to 4131 to 4170 (RTTTCFGDGCQNTASRCKNGGTWDGLKCQCPNLYYGELCE). 3 cysteine pairs are disulfide-bonded: Cys4135-Cys4147, Cys4140-Cys4158, and Cys4160-Cys4169. Positions 4184–4291 (ISAQMELTVT…QQIMINDICS (108 aa)) constitute an SEA domain. 5 N-linked (GlcNAc...) asparagine glycosylation sites follow: Asn4205, Asn4236, Asn4267, Asn4297, and Asn4305. The helical transmembrane segment at 4394-4414 (LVGAGVVLMLIILVALLMLVF) threads the bilayer. Topologically, residues 4415–4493 (RSKREVKRQK…QRPQVMTTSF (79 aa)) are cytoplasmic.

As to quaternary structure, interacts via its C-terminus with PDZK1 and this interaction appears important for proper localization. Probably cleaved within the SEA domain. Post-translationally, N-glycosylated. Contains high mannose and complex-type glycans. The forms containing the complex type glycans localize to the cell surface. Not O-glycosylated. Expressed almost exclusively in the intestine. Expression is especially high in both the duodenum and transverse colon. Expressed in mature absorptive cells of the small intestinal villi. No expression is detected in goblet cells. Highly expressed in pancreatic adenocarcinoma tissue (at protein level). Expression is not detectable in normal pancreas, in pancreatitis or in cell lines derived from other cancers.

Its subcellular location is the cell membrane. It localises to the secreted. Its function is as follows. Probably plays a role in maintaining homeostasis on mucosal surfaces. The chain is Mucin-17 (MUC17) from Homo sapiens (Human).